The following is a 244-amino-acid chain: 5-oxoprolinase subunit A (244 aa).

Belongs to the LamB/PxpA family. As to quaternary structure, forms a complex composed of PxpA, PxpB and PxpC.

It carries out the reaction 5-oxo-L-proline + ATP + 2 H2O = L-glutamate + ADP + phosphate + H(+). Catalyzes the cleavage of 5-oxoproline to form L-glutamate coupled to the hydrolysis of ATP to ADP and inorganic phosphate. In Shigella flexneri, this protein is 5-oxoprolinase subunit A.